Consider the following 79-residue polypeptide: Crassicorin-I (79 aa).

The first 19 residues, 1 to 19 (MKLFLVSIVLVGMLVLAAA), serve as a signal peptide directing secretion. Residues 20–39 (RPERDIDSFDEQEEKGFVKR) constitute a propeptide that is removed on maturation. Cystine bridges form between C43-C76, C45-C69, and C59-C77.

The protein belongs to the sea anemone type 3 (BDS) potassium channel toxin family. Highly expressed by the mesenteries. Moderately expressed by the pharynx. Weakly expressed by the gonad and pedal disk. No expression in tentacle.

The protein localises to the secreted. Its subcellular location is the nematocyst. Peptide with both antimicrobial and neurotoxin activities. Cationic AMP with antibacterial activity against both Gram-positive bacteria (B.subtilis, MIC=11.49 ug/mL) and Gram-negative bacteria (E.coli (MIC=12.21 ug/mL) and S.enterica (MIC=11.95 ug/mL)). Shows no significant antimicrobial activity against bacteria S.aureus and P.aeruginosa, as well as the fungus C.albicans. In vivo, induces reversible paralytic activity towards the shrimp P.paucidens. May act by impairing sodium or potassium channels in the prey. In Urticina crassicornis (Mottled anemone), this protein is Crassicorin-I.